Reading from the N-terminus, the 344-residue chain is MVEKEEAVISEEEAAQYDRQIRLWGLEAQKRLRTSRVLLVGMRGLGAEVAKNLILAGVKALTLLDHEQVSSEDSRAQFLIPSGSLGQNRAEASLNRARNLNPMVSVEADTENINQKSDDFFTQFDVVCLTSCPSDLLVRVNHICHKHNIKFFTGDVYGYHGSMFADLGEHEFVEEKAKVTKAKPLVEDGPEAKKAKIDPTETILVKKKVQFCPLKDALEIDWRSEKAKSALKKTPTDYFLLQVLMKFRTDKGRDPQPSSYQEDSELLLQICSDVLDSLGVSPDLLPKDFASYCFSEMAPVCAVVGGVLGQEIVKALSLRDAPHNNFFFFDGKTSNGIVDCLGSK.

This sequence belongs to the ubiquitin-activating E1 family. Heterodimer of sae1 and uba2/sae2. The heterodimer corresponds to the two domains that are encoded on a single polypeptide chain in ubiquitin-activating enzyme E1. Interacts with ube2i.

The protein resides in the nucleus. It participates in protein modification; protein sumoylation. Functionally, the heterodimer acts as an E1 ligase for sumo1, sumo2, and sumo3. It mediates ATP-dependent activation of sumo proteins followed by formation of a thioester bond between a sumo protein and a conserved active site cysteine residue on uba2/sae2. The protein is SUMO-activating enzyme subunit 1 (sae1) of Xenopus laevis (African clawed frog).